A 335-amino-acid polypeptide reads, in one-letter code: tRNA N6-adenosine threonylcarbamoyltransferase (335 aa).

Residues His109, His113, and Tyr130 each coordinate a divalent metal cation. Substrate contacts are provided by residues 130-134 (YVSGG), Asp162, Gly177, Glu181, and Asn266. Asp294 is an a divalent metal cation binding site.

This sequence belongs to the KAE1 / TsaD family. In terms of assembly, component of the EKC/KEOPS complex composed of at least tp53rk, tprkb, osgep and lage3; the whole complex dimerizes. It depends on a divalent metal cation as a cofactor.

It is found in the cytoplasm. The protein resides in the nucleus. The catalysed reaction is L-threonylcarbamoyladenylate + adenosine(37) in tRNA = N(6)-L-threonylcarbamoyladenosine(37) in tRNA + AMP + H(+). Component of the EKC/KEOPS complex that is required for the formation of a threonylcarbamoyl group on adenosine at position 37 (t(6)A37) in tRNAs that read codons beginning with adenine. The complex is probably involved in the transfer of the threonylcarbamoyl moiety of threonylcarbamoyl-AMP (TC-AMP) to the N6 group of A37. Osgep likely plays a direct catalytic role in this reaction, but requires other protein(s) of the complex to fulfill this activity. The chain is tRNA N6-adenosine threonylcarbamoyltransferase from Xenopus laevis (African clawed frog).